Reading from the N-terminus, the 304-residue chain is Probable solute-binding protein AdeT1 (304 aa).

Belongs to the bacterial solute-binding protein 7 family.

Functionally, mediates antimicrobial resistance via active efflux. Contributes to resistance to antibiotics such as chloramphenicol, erythromycin and novobiocin. May be part of a tripartite ATP-independent periplasmic (TRAP) transport system. The chain is Probable solute-binding protein AdeT1 from Acinetobacter baumannii.